The chain runs to 89 residues: Small ribosomal subunit protein uS15 (89 aa).

It belongs to the universal ribosomal protein uS15 family. In terms of assembly, part of the 30S ribosomal subunit. Forms a bridge to the 50S subunit in the 70S ribosome, contacting the 23S rRNA.

One of the primary rRNA binding proteins, it binds directly to 16S rRNA where it helps nucleate assembly of the platform of the 30S subunit by binding and bridging several RNA helices of the 16S rRNA. Functionally, forms an intersubunit bridge (bridge B4) with the 23S rRNA of the 50S subunit in the ribosome. This chain is Small ribosomal subunit protein uS15, found in Corynebacterium aurimucosum (strain ATCC 700975 / DSM 44827 / CIP 107346 / CN-1) (Corynebacterium nigricans).